The chain runs to 269 residues: Regulating synaptic membrane exocytosis protein 4 (269 aa).

A C2 domain is found at 115 to 233; that stretch reads PMGDVEIGLQ…DLTTLAVGWY (119 aa). S254 and S257 each carry phosphoserine.

In terms of assembly, binds PPFIA3. Does not bind RAB3.

The protein localises to the synapse. In terms of biological role, regulates synaptic membrane exocytosis. This chain is Regulating synaptic membrane exocytosis protein 4 (Rims4), found in Mus musculus (Mouse).